A 596-amino-acid polypeptide reads, in one-letter code: Deuterosome assembly protein 1 (596 aa).

Coiled-coil stretches lie at residues 8–68, 130–180, and 227–284; these read IARN…NHEI, CELQ…FQKE, and IENL…DLLR. A compositionally biased stretch (polar residues) spans 297–306; sequence TANLANQKTA. The disordered stretch occupies residues 297 to 316; sequence TANLANQKTAQGEEASFQVT. A coiled-coil region spans residues 337–402; the sequence is SEKYQAENDL…LKGAQNRQTS (66 aa). A disordered region spans residues 447–467; the sequence is DKPQKHRSFHGENNSLKPTNY. The span at 457–467 shows a compositional bias: polar residues; the sequence is GENNSLKPTNY.

The protein belongs to the CEP63 family.

The protein localises to the cytoplasm. In terms of biological role, key structural component of the deuterosome, a structure that promotes de novo centriole amplification in multiciliated cells. Deuterosome-mediated centriole amplification occurs in terminally differentiated multiciliated cells and can generate more than 100 centrioles. Probably sufficient for the specification and formation of the deuterosome inner core. This is Deuterosome assembly protein 1 from Xenopus tropicalis (Western clawed frog).